The chain runs to 342 residues: S-adenosylmethionine:tRNA ribosyltransferase-isomerase (342 aa).

The protein belongs to the QueA family. As to quaternary structure, monomer.

It is found in the cytoplasm. It catalyses the reaction 7-aminomethyl-7-carbaguanosine(34) in tRNA + S-adenosyl-L-methionine = epoxyqueuosine(34) in tRNA + adenine + L-methionine + 2 H(+). The protein operates within tRNA modification; tRNA-queuosine biosynthesis. Transfers and isomerizes the ribose moiety from AdoMet to the 7-aminomethyl group of 7-deazaguanine (preQ1-tRNA) to give epoxyqueuosine (oQ-tRNA). This is S-adenosylmethionine:tRNA ribosyltransferase-isomerase from Listeria monocytogenes serotype 4a (strain HCC23).